Reading from the N-terminus, the 501-residue chain is Endosomal/lysosomal proton channel TMEM175 (501 aa).

Residues 1–20 (MAAPRAATPGPGGGARKPEL) form a disordered region. Residues 1 to 31 (MAAPRAATPGPGGGARKPELDLELGSSTQTS) lie on the Cytoplasmic side of the membrane. Residues 32–54 (HRLLAYSDALLSIIATVMILPVA) traverse the membrane as a helical segment. The RxxxFSD motif 1 motif lies at 33 to 39 (RLLAYSD). Over 55–75 (HTKIHPDQKLGESVQQLLLTK) the chain is Lumenal. The short helix H1-1 stretch occupies residues 56–61 (TKIHPD). The interval 63-69 (KLGESVQ) is short helix H2-1. A helical membrane pass occupies residues 76–98 (IAVYLMTFLIVTVAWAAHVRLFQ). The Cytoplasmic portion of the chain corresponds to 99–104 (VIELID). The chain crosses the membrane as a helical span at residues 105-126 (DVLALLNLACMMIITFLPYTFS). At 127-136 (LMASFPGVPF) the chain is on the lumenal side. A helical membrane pass occupies residues 137–158 (GIFLFSVCAVVIGLIQAVIVVY). Over 159–182 (GFYHPHLLNQQIQVSENQNFYKRH) the chain is Cytoplasmic. The helical transmembrane segment at 183 to 203 (ILKIILRGPALCFLAAIFSFF) threads the bilayer. The Lumenal portion of the chain corresponds to 204-208 (FIPLS). The helical transmembrane segment at 209-228 (YLLLGLVIVFPHLSRFITWC) threads the bilayer. At 229-257 (KTKIVGHRDEEEASYSLETFSFYLSEPLS) the chain is on the cytoplasmic side. A helical transmembrane segment spans residues 258–282 (KERVEAFSDGVYAIVATLLILDICE). A RxxxFSD motif 2 motif is present at residues 260 to 266 (RVEAFSD). At 283-309 (DNVPDPREVGEKFHGSLLEALSEYGPN) the chain is on the lumenal side. Positions 288–296 (PREVGEKFH) are short helix H1-2. A short helix H2-2 region spans residues 298–304 (SLLEALS). Residues 310 to 332 (YLAYFGSFVTIGLLWFVHHSLFL) traverse the membrane as a helical segment. The Cytoplasmic segment spans residues 333-338 (YVTKAT). The helical transmembrane segment at 339 to 360 (RLMGLLNILSLAFIGGLPLAYQ) threads the bilayer. Residues 361–375 (LTSEFAEKSHNEIEA) lie on the Lumenal side of the membrane. The helical transmembrane segment at 376–396 (IQVSCVITFFASIFQFAIWTT) threads the bilayer. At 397 to 416 (ALLHERETLHPFARYGGKEH) the chain is on the cytoplasmic side. Residues 417–440 (AFMFAKLALYPCVSLGAFFLTCLL) form a helical membrane-spanning segment. Residues 441–442 (SE) lie on the Lumenal side of the membrane. Residues 443–469 (FSTEIFHLMQIVIPFAFLALRIFVRIS) form a helical membrane-spanning segment. Over 470–501 (LTVIKSVMSLSRRKVVLLEEEEACLSPTETHS) the chain is Cytoplasmic.

The protein belongs to the TMEM175 family. Homodimer.

It is found in the endosome membrane. The protein localises to the lysosome membrane. It carries out the reaction H(+)(in) = H(+)(out). The catalysed reaction is K(+)(in) = K(+)(out). With respect to regulation, active at low pH (under pH 4.6): proton channel activity is activated by luminal side protons. Polyunsaturated fatty acids, such as arachidonic acid, also activate the channel activity. Proton-activated proton channel that catalyzes proton efflux from endosomes and lysosomes to maintain a steady-state pH. Activated at low pH (under pH 4.6) by luminal side protons: selectively mediates lysosomal proton release from lysosomes, eliciting a proton leak that balances V-ATPase activity to maintain pH homeostasis. Regulation of lumenal pH stability is required for autophagosome-lysosome fusion. Also acts as a potassium channel at higher pH, regulating potassium conductance in endosomes and lysosomes. This is Endosomal/lysosomal proton channel TMEM175 from Gallus gallus (Chicken).